A 441-amino-acid chain; its full sequence is Apolipoprotein N-acyltransferase (441 aa).

7 helical membrane-spanning segments follow: residues Ile23–Leu43, Phe45–Leu65, Tyr75–Ile95, Phe97–Leu117, Gly133–Phe153, Tyr156–Ile176, and Glu178–Phe198. One can recognise a CN hydrolase domain in the interval Ile215–Lys441. Glu256 (proton acceptor) is an active-site residue. Lys310 is an active-site residue. Catalysis depends on Cys359, which acts as the Nucleophile.

It belongs to the CN hydrolase family. Apolipoprotein N-acyltransferase subfamily.

The protein resides in the cell inner membrane. The catalysed reaction is N-terminal S-1,2-diacyl-sn-glyceryl-L-cysteinyl-[lipoprotein] + a glycerophospholipid = N-acyl-S-1,2-diacyl-sn-glyceryl-L-cysteinyl-[lipoprotein] + a 2-acyl-sn-glycero-3-phospholipid + H(+). It functions in the pathway protein modification; lipoprotein biosynthesis (N-acyl transfer). Catalyzes the phospholipid dependent N-acylation of the N-terminal cysteine of apolipoprotein, the last step in lipoprotein maturation. The sequence is that of Apolipoprotein N-acyltransferase from Campylobacter jejuni subsp. jejuni serotype O:2 (strain ATCC 700819 / NCTC 11168).